The following is a 554-amino-acid chain: Wee1-like protein kinase 2-C (554 aa).

Disordered stretches follow at residues 1-86 (MRTA…GGEC) and 145-183 (TLVN…SQMK). 2 stretches are compositionally biased toward polar residues: residues 38–48 (SPVSSWRTNNC) and 147–163 (VNVN…THFQ). The Protein kinase domain maps to 213 to 487 (FLEIEKIGAG…AKNSVLRRCV (275 aa)). ATP is bound by residues 219–227 (IGAGEFGSV) and Lys242. Asp340 acts as the Proton acceptor in catalysis. Positions 345 and 377 each coordinate Mg(2+). A coiled-coil region spans residues 490–516 (AAELQKQLNVEKFKTAMLERELQAAKL).

It belongs to the protein kinase superfamily. Ser/Thr protein kinase family. WEE1 subfamily.

The protein resides in the nucleus. The enzyme catalyses L-tyrosyl-[protein] + ATP = O-phospho-L-tyrosyl-[protein] + ADP + H(+). Its function is as follows. Protein tyrosine kinase that phosphorylates and inhibits cdk1 and acts as a regulator of meiosis in oocytes. Required to ensure the meiotic cell cycle in oocytes by phosphorylating cdk1 at 'Tyr-15', leading to inhibit cdk1 activity and prevent meiosis. The sequence is that of Wee1-like protein kinase 2-C (wee2-c) from Xenopus laevis (African clawed frog).